Consider the following 104-residue polypeptide: Large ribosomal subunit protein bL21 (104 aa).

It belongs to the bacterial ribosomal protein bL21 family. Part of the 50S ribosomal subunit. Contacts protein L20.

Its function is as follows. This protein binds to 23S rRNA in the presence of protein L20. In Tropheryma whipplei (strain Twist) (Whipple's bacillus), this protein is Large ribosomal subunit protein bL21.